A 197-amino-acid chain; its full sequence is Segregation and condensation protein B (197 aa).

Belongs to the ScpB family. Homodimer. Homodimerization may be required to stabilize the binding of ScpA to the Smc head domains. Component of a cohesin-like complex composed of ScpA, ScpB and the Smc homodimer, in which ScpA and ScpB bind to the head domain of Smc. The presence of the three proteins is required for the association of the complex with DNA.

Its subcellular location is the cytoplasm. In terms of biological role, participates in chromosomal partition during cell division. May act via the formation of a condensin-like complex containing Smc and ScpA that pull DNA away from mid-cell into both cell halves. In Halalkalibacterium halodurans (strain ATCC BAA-125 / DSM 18197 / FERM 7344 / JCM 9153 / C-125) (Bacillus halodurans), this protein is Segregation and condensation protein B.